A 141-amino-acid polypeptide reads, in one-letter code: 3-hydroxyacyl-[acyl-carrier-protein] dehydratase FabZ (141 aa).

H48 is a catalytic residue.

This sequence belongs to the thioester dehydratase family. FabZ subfamily.

It localises to the cytoplasm. It carries out the reaction a (3R)-hydroxyacyl-[ACP] = a (2E)-enoyl-[ACP] + H2O. Involved in unsaturated fatty acids biosynthesis. Catalyzes the dehydration of short chain beta-hydroxyacyl-ACPs and long chain saturated and unsaturated beta-hydroxyacyl-ACPs. The protein is 3-hydroxyacyl-[acyl-carrier-protein] dehydratase FabZ of Bacillus subtilis (strain 168).